Here is a 379-residue protein sequence, read N- to C-terminus: Orotidine 5'-phosphate decarboxylase (379 aa).

Residues Asp42, 64-66 (KTH), and 99-108 (DRKFGDIGHT) contribute to the substrate site. Residue Lys101 is the Proton donor of the active site. Residues 165–198 (PTMDQFDDAEDAKDDEPATVNDNGSNMMEKPIYA) form a disordered region. Residues 169–178 (QFDDAEDAKD) show a composition bias toward acidic residues. Residues Tyr331 and Arg350 each coordinate substrate.

The protein belongs to the OMP decarboxylase family.

The enzyme catalyses orotidine 5'-phosphate + H(+) = UMP + CO2. It functions in the pathway pyrimidine metabolism; UMP biosynthesis via de novo pathway; UMP from orotate: step 2/2. The sequence is that of Orotidine 5'-phosphate decarboxylase (pyr4) from Hypocrea atroviridis (Trichoderma atroviride).